The chain runs to 388 residues: Nesprin-4 (388 aa).

Over 1–339 the chain is Cytoplasmic; that stretch reads MALVPPLGRE…GVPAPASKRP (339 aa). Residues 60–92 are disordered; the sequence is ELKSTESATSPSRLPLASSHEHQDGGKPCEHSD. The segment covering 78-92 has biased composition (basic and acidic residues); it reads SHEHQDGGKPCEHSD. The KASH domain occupies 331–388; the sequence is VPAPASKRPLTLFFLLLFLLLVGATLLLPLSGVSCCSHARLARTPYLVLSYVNGLPPI. Residues 340–360 form a helical; Anchor for type IV membrane protein membrane-spanning segment; that stretch reads LTLFFLLLFLLLVGATLLLPL. Topologically, residues 361 to 388 are perinuclear space; it reads SGVSCCSHARLARTPYLVLSYVNGLPPI.

This sequence belongs to the nesprin family. Core component of LINC complexes which are composed of inner nuclear membrane SUN domain-containing proteins coupled to outer nuclear membrane KASH domain-containing nesprins. SUN and KASH domain-containing proteins seem to bind each other promiscuously; however, differentially expression of LINC complex constituents can give rise to specific assemblies. Probably part of a SUN1-containing LINC complex. Interacts with kinesins KIF5B and KLC1. The disulfid bond with SUN1 or SUN2 is required for stability of the respective LINC complex under tensile forces. Expressed in secretory epithelial cells, such as those found in exocrine pancreas, bulbourethral gland, mammary gland and salivary gland (at protein level). Also expressed in the cochlea, where it is restricted primarily to the 3 rows of outer hair cells and 1 row of inner hair cells (at protein level). Not detected in other cells of the cochlea, including Deiter's cells and pillar cells, nor in liver and kidney (at protein level).

It is found in the nucleus outer membrane. As a component of the LINC (LInker of Nucleoskeleton and Cytoskeleton) complex, involved in the connection between the nuclear lamina and the cytoskeleton. The nucleocytoplasmic interactions established by the LINC complex play an important role in the transmission of mechanical forces across the nuclear envelope and in nuclear movement and positioning. Behaves as a kinesin cargo, providing a functional binding site for kinesin-1 at the nuclear envelope. Hence may contribute to the establishment of secretory epithelial morphology, by promoting kinesin-dependent apical migration of the centrosome and Golgi apparatus and basal localization of the nucleus. The polypeptide is Nesprin-4 (Syne4) (Mus musculus (Mouse)).